The primary structure comprises 119 residues: Centrocin 1 (119 aa).

An N-terminal signal peptide occupies residues 1 to 20; it reads MMIKIAVVLCAVMATTMVRA. Positions 21 to 50 are excised as a propeptide; sequence KYVEEQELADLLDLLISEEVSSPDDAVALQ. 6'-bromotryptophan is present on residues tryptophan 52 and tryptophan 53. Cysteines 75 and 110 form a disulfide. A propeptide spanning residues 81–104 is cleaved from the precursor; it reads SPQEARAKVLEAFPEMKEADLDEE. At asparagine 117 the chain carries Asparagine amide.

In terms of assembly, heterodimer of a light and a heavy chain, probably disulfide-linked.

Its function is as follows. Has antimicrobial activity against Gram-negative bacteria, Gram-positive bacteria and against fungi with minimum inhibitory concentration (MIC) between 0.78 uM and 50 uM. Shows little hemolytic activity even at a concentration of 100 uM. Has no antimicrobial activity. Shows no hemolytic activity. The chain is Centrocin 1 from Echinus esculentus (Sea urchin).